Here is a 739-residue protein sequence, read N- to C-terminus: Protein kinase C (739 aa).

The region spanning 1 to 117 is the C2 domain; that stretch reads MFTGKLQIKV…SETAVQDLWV (117 aa). 2 consecutive Phorbol-ester/DAG-type zinc fingers follow at residues 176 to 226 and 251 to 301; these read GHKF…VSKC and PHRF…ANTC. The Protein kinase domain occupies 408–665; the sequence is FNFIKVLGKG…ENEIRKHPFF (258 aa). Residues 414 to 422 and lysine 437 each bind ATP; that span reads LGKGSFGKV. Aspartate 532 functions as the Proton acceptor in the catalytic mechanism. One can recognise an AGC-kinase C-terminal domain in the interval 666-737; that stretch reads AKLDWKELEK…VNPKFGPERK (72 aa).

It belongs to the protein kinase superfamily. AGC Ser/Thr protein kinase family. PKC subfamily.

The catalysed reaction is L-seryl-[protein] + ATP = O-phospho-L-seryl-[protein] + ADP + H(+). The enzyme catalyses L-threonyl-[protein] + ATP = O-phospho-L-threonyl-[protein] + ADP + H(+). Functionally, PKC is activated by diacylglycerol which in turn phosphorylates a range of cellular proteins. PKC also serves as the receptor for phorbol esters, a class of tumor promoters. In Drosophila melanogaster (Fruit fly), this protein is Protein kinase C (Pkc98E).